The following is a 506-amino-acid chain: Transforming growth factor beta-1-induced transcript 1 protein (506 aa).

The LD motif 1 signature appears at 3–15; it reads DLDALLADLQITT. Residues 15 to 62 are disordered; the sequence is TPPRCPVLLTDSPEKPQPTETRPPPPPYDPKTAMSNKTSDHETFPVDK. Residues 52–62 are compositionally biased toward basic and acidic residues; it reads TSDHETFPVDK. Short sequence motifs (LD motif) lie at residues 87–99 and 139–150; these read ELDR…NATQ and ELDRLMASLSDF. Disordered regions lie at residues 154-201 and 221-244; these read NTVS…PTPK and SDEV…ATSV. Residues 168-177 show a composition bias toward basic and acidic residues; sequence GSEEVSRPGD. The LD motif 4 signature appears at 248–260; the sequence is DLDSMLVKLQSGL. LIM zinc-binding domains follow at residues 271-330, 331-388, 389-448, and 449-506; these read GLCE…LYAP, RCAL…RLFG, AVCA…RRGS, and LCAG…RLYG.

This sequence belongs to the paxillin family. Interacts with tcf3 and tcf7l2.

It localises to the cell junction. The protein localises to the focal adhesion. Its subcellular location is the nucleus matrix. The protein resides in the cytoplasm. It is found in the cytoskeleton. Functions as a molecular adapter coordinating multiple protein-protein interactions at the focal adhesion complex and in the nucleus. May regulate both Wnt and steroid signaling pathways and play a role in the processes of cell growth, proliferation, migration, differentiation and senescence. May have a zinc-dependent DNA-binding activity. The chain is Transforming growth factor beta-1-induced transcript 1 protein (tgfb1i1) from Xenopus laevis (African clawed frog).